The following is a 600-amino-acid chain: NAD-dependent malic enzyme, mitochondrial (600 aa).

The transit peptide at 1–68 (MTRTPFTLSL…NMPIAAPVRT (68 aa)) directs the protein to the mitochondrion. R93 is a fumarate binding site. Y138 functions as the Proton donor in the catalytic mechanism. R194 contacts (S)-malate. Residue R194 coordinates NAD(+). The Proton acceptor role is filled by K212. E283, D284, and D307 together coordinate a divalent metal cation. 2 residues coordinate NAD(+): G344 and A347. N458 and N502 together coordinate (S)-malate.

It belongs to the malic enzymes family. Mg(2+) is required as a cofactor. Mn(2+) serves as cofactor.

It is found in the mitochondrion matrix. Its subcellular location is the cytoplasm. The protein localises to the cytosol. The protein resides in the nucleus. The enzyme catalyses (S)-malate + NAD(+) = pyruvate + CO2 + NADH. The catalysed reaction is oxaloacetate + H(+) = pyruvate + CO2. In terms of biological role, NAD-dependent mitochondrial malic enzyme that catalyzes the oxidative decarboxylation of malate to pyruvate. The sequence is that of NAD-dependent malic enzyme, mitochondrial from Cryptococcus neoformans var. grubii serotype A (strain H99 / ATCC 208821 / CBS 10515 / FGSC 9487) (Filobasidiella neoformans var. grubii).